The chain runs to 79 residues: Sec-independent protein translocase protein TatA (79 aa).

A helical membrane pass occupies residues 1-21 (MGGFTSIWHWVIVLLVIVLLF). The interval 48–79 (EEEAKNEPKTLDAQVAQTKVHETSEIKSKQES) is disordered. A compositionally biased stretch (basic and acidic residues) spans 66 to 79 (KVHETSEIKSKQES).

This sequence belongs to the TatA/E family. In terms of assembly, the Tat system comprises two distinct complexes: a TatABC complex, containing multiple copies of TatA, TatB and TatC subunits, and a separate TatA complex, containing only TatA subunits. Substrates initially bind to the TatABC complex, which probably triggers association of the separate TatA complex to form the active translocon.

The protein resides in the cell inner membrane. Its function is as follows. Part of the twin-arginine translocation (Tat) system that transports large folded proteins containing a characteristic twin-arginine motif in their signal peptide across membranes. TatA could form the protein-conducting channel of the Tat system. This Helicobacter pylori (strain Shi470) protein is Sec-independent protein translocase protein TatA.